A 116-amino-acid polypeptide reads, in one-letter code: Large ribosomal subunit protein uL18 (116 aa).

The protein belongs to the universal ribosomal protein uL18 family. As to quaternary structure, part of the 50S ribosomal subunit; part of the 5S rRNA/L5/L18/L25 subcomplex. Contacts the 5S and 23S rRNAs.

Functionally, this is one of the proteins that bind and probably mediate the attachment of the 5S RNA into the large ribosomal subunit, where it forms part of the central protuberance. This Shewanella baltica (strain OS223) protein is Large ribosomal subunit protein uL18.